We begin with the raw amino-acid sequence, 130 residues long: Small ribosomal subunit protein eS8 (130 aa).

It belongs to the eukaryotic ribosomal protein eS8 family. Part of the 30S ribosomal subunit.

The polypeptide is Small ribosomal subunit protein eS8 (Thermococcus onnurineus (strain NA1)).